The primary structure comprises 423 residues: Probable peptidoglycan glycosyltransferase FtsW (423 aa).

Residues 1–53 (MNLKEKLFPENRLGLNRFWNFSRGGIDNFRTGLRDAVSGVEQTRSRMMEYDQL) are Cytoplasmic-facing. Residues 54–74 (LVWAILSLMLIGLVMVYSASI) traverse the membrane as a helical segment. Residues 75-88 (TLADGPKYANYSSN) are Periplasmic-facing. The helical transmembrane segment at 89–109 (FFLIRHMISLAIAIGVGIWAF) threads the bilayer. The Cytoplasmic segment spans residues 110–119 (KIPTKVWDRY). The helical transmembrane segment at 120–140 (SPVIFGITVLLLIAVLIPGVG) threads the bilayer. Residues 141–149 (RGVNGAKRW) lie on the Periplasmic side of the membrane. The helical transmembrane segment at 150–170 (IPLGLMNFQSSELMKFAAVIF) threads the bilayer. The Cytoplasmic portion of the chain corresponds to 171 to 184 (AASYTVQRQEYLHS). The helical transmembrane segment at 185 to 205 (FVKGMLPMGIAVALVGGLLMA) threads the bilayer. At 206–208 (EPD) the chain is on the periplasmic side. A helical transmembrane segment spans residues 209–229 (MGAFVVVALIAFGILFLGGIN). Residues 230 to 231 (AK) are Cytoplasmic-facing. A helical membrane pass occupies residues 232–252 (LFGGLIAVGLMSGATMIAFSP). The Periplasmic segment spans residues 253–310 (LRRGRMLAFMDPWQVDNAANKGYQLTHSLMAFGRGEWFGTGLGGSVEKLHYLPEAHTD). Residues 311–331 (FIMAVIGEELGFVGVVVMIFL) traverse the membrane as a helical segment. Over 332–359 (FYWIVRRAFLIGRTALQLDRSFAGLAAK) the chain is Cytoplasmic. A helical transmembrane segment spans residues 360-380 (GVAIWIGWQAFINMGVNLGLL). Over 381 to 386 (PTKGLT) the chain is Periplasmic. The helical transmembrane segment at 387-407 (LPLVSYGGSGILMNAVAMAML) threads the bilayer. At 408 to 423 (LRIDFENRILMRGGKL) the chain is on the cytoplasmic side.

Belongs to the SEDS family. FtsW subfamily.

The protein resides in the cell inner membrane. The enzyme catalyses [GlcNAc-(1-&gt;4)-Mur2Ac(oyl-L-Ala-gamma-D-Glu-L-Lys-D-Ala-D-Ala)](n)-di-trans,octa-cis-undecaprenyl diphosphate + beta-D-GlcNAc-(1-&gt;4)-Mur2Ac(oyl-L-Ala-gamma-D-Glu-L-Lys-D-Ala-D-Ala)-di-trans,octa-cis-undecaprenyl diphosphate = [GlcNAc-(1-&gt;4)-Mur2Ac(oyl-L-Ala-gamma-D-Glu-L-Lys-D-Ala-D-Ala)](n+1)-di-trans,octa-cis-undecaprenyl diphosphate + di-trans,octa-cis-undecaprenyl diphosphate + H(+). The protein operates within cell wall biogenesis; peptidoglycan biosynthesis. Functionally, peptidoglycan polymerase that is essential for cell division. This Polynucleobacter necessarius subsp. necessarius (strain STIR1) protein is Probable peptidoglycan glycosyltransferase FtsW.